We begin with the raw amino-acid sequence, 461 residues long: GTPase Der (461 aa).

EngA-type G domains follow at residues 2-164 (QKII…EDDV) and 197-368 (IRVG…KNFT). Residues 8-15 (GKPNVGKS), 55-59 (DSGGL), 116-119 (NKID), 203-210 (GRVNVGKS), 250-254 (DTAGI), and 314-317 (NKWD) contribute to the GTP site. Positions 369–453 (QKIQTSKLNE…PIVLAPKKRG (85 aa)) constitute a KH-like domain.

The protein belongs to the TRAFAC class TrmE-Era-EngA-EngB-Septin-like GTPase superfamily. EngA (Der) GTPase family. As to quaternary structure, associates with the 50S ribosomal subunit.

In terms of biological role, GTPase that plays an essential role in the late steps of ribosome biogenesis. The chain is GTPase Der from Campylobacter curvus (strain 525.92).